The following is a 290-amino-acid chain: Ribosomal RNA small subunit methyltransferase A (290 aa).

6 residues coordinate S-adenosyl-L-methionine: asparagine 27, leucine 29, glycine 54, glutamate 75, aspartate 100, and asparagine 125.

This sequence belongs to the class I-like SAM-binding methyltransferase superfamily. rRNA adenine N(6)-methyltransferase family. RsmA subfamily.

The protein localises to the cytoplasm. It carries out the reaction adenosine(1518)/adenosine(1519) in 16S rRNA + 4 S-adenosyl-L-methionine = N(6)-dimethyladenosine(1518)/N(6)-dimethyladenosine(1519) in 16S rRNA + 4 S-adenosyl-L-homocysteine + 4 H(+). Its function is as follows. Specifically dimethylates two adjacent adenosines (A1518 and A1519) in the loop of a conserved hairpin near the 3'-end of 16S rRNA in the 30S particle. May play a critical role in biogenesis of 30S subunits. In Streptococcus pyogenes serotype M18 (strain MGAS8232), this protein is Ribosomal RNA small subunit methyltransferase A.